A 131-amino-acid chain; its full sequence is Large-conductance mechanosensitive channel (131 aa).

The next 3 helical transmembrane spans lie at 8–28, 30–50, and 67–87; these read FAVRGNVIDLAVGVIIGGAFG, IVSSLVNDIIMPLVGLILGGI, and GAFLQTVVDFLVIAFSIFLFV.

The protein belongs to the MscL family. In terms of assembly, homopentamer.

The protein localises to the cell membrane. In terms of biological role, channel that opens in response to stretch forces in the membrane lipid bilayer. May participate in the regulation of osmotic pressure changes within the cell. This Anoxybacillus flavithermus (strain DSM 21510 / WK1) protein is Large-conductance mechanosensitive channel.